Reading from the N-terminus, the 398-residue chain is Serine/threonine-protein phosphatase 2A activator (398 aa).

Arginine 137, threonine 142, and glycine 143 together coordinate ATP. Mg(2+) contacts are provided by glycine 197 and aspartate 203. ATP is bound by residues proline 293, glutamine 296, and histidine 297. The span at 343-352 (PVATAPPPPA) shows a compositional bias: pro residues. The disordered stretch occupies residues 343-398 (PVATAPPPPAESLSIEQNVGDSSSESSDNSVVLRPSTSSSSLVAAAEGSGDKPSKE). Positions 363-388 (DSSSESSDNSVVLRPSTSSSSLVAAA) are enriched in low complexity.

Belongs to the PTPA-type PPIase family. As to quaternary structure, associates with PP2A heterodimeric core enzyme PP2A(D), composed of a catalytic subunit (subunit C) and a constant regulatory subunit (PR65 or subunit A). Interacts with the catalytic subunit Pp4-19C of the serine/threonine-protein phosphatase 4 (PP4) complex; thereby mediating basal localization of the Miranda (Mira) complex; probably by facilitating the dephosphorylation of Mira.

Its subcellular location is the cytoplasm. The protein localises to the nucleus. It catalyses the reaction [protein]-peptidylproline (omega=180) = [protein]-peptidylproline (omega=0). Functionally, PPIases accelerate the folding of proteins. It catalyzes the cis-trans isomerization of proline imidic peptide bonds in oligopeptides. Acts as a regulatory subunit for serine/threonine-protein phosphatase 2A (PP2A). Modulates PP2A activity or substrate specificity, probably by inducing a conformational change in the catalytic subunit, a proposed direct target of the PPIase. Acts as mediator for the basal localization of the Miranda (Mira) complex during mitosis of larval neuroblast asymmetric division. Associates with the phosphatase 4 (PP4) complex to mediate basal localization of Mira; probably by facilitating the dephosphorylation of Mira. Cortical association of Mira mediated by the PTPA-PP4 complex seems to be independent of aPKC activity. In Drosophila melanogaster (Fruit fly), this protein is Serine/threonine-protein phosphatase 2A activator.